The chain runs to 227 residues: MSIAAAPLTLALSKGRIFEETLPLLAEAGIGVVESPESSRKLILPTSDPGLRLIIVRASDVPTYVQYGAADFGIAGKDVLIEHAAGQAGRLYQPIDLNIAKCRLSVAVREDFDYAAAVHQGARLRVATKYVQSAREHFASKGVYVDLIKLYGSMELAPLVGLADAIVDLVSTGGTLRANGLREVETIMPISSRLIVNQASLKTRGASLQPLLDAFQRASQGQADSNS.

Belongs to the ATP phosphoribosyltransferase family. Short subfamily. As to quaternary structure, heteromultimer composed of HisG and HisZ subunits.

It is found in the cytoplasm. The enzyme catalyses 1-(5-phospho-beta-D-ribosyl)-ATP + diphosphate = 5-phospho-alpha-D-ribose 1-diphosphate + ATP. It participates in amino-acid biosynthesis; L-histidine biosynthesis; L-histidine from 5-phospho-alpha-D-ribose 1-diphosphate: step 1/9. In terms of biological role, catalyzes the condensation of ATP and 5-phosphoribose 1-diphosphate to form N'-(5'-phosphoribosyl)-ATP (PR-ATP). Has a crucial role in the pathway because the rate of histidine biosynthesis seems to be controlled primarily by regulation of HisG enzymatic activity. This chain is ATP phosphoribosyltransferase, found in Bordetella avium (strain 197N).